The following is an 89-amino-acid chain: cAMP-regulated phosphoprotein 21 (89 aa).

The tract at residues 1–89 (MSEPGDLSQT…GGESLQDQTL (89 aa)) is disordered. An N-acetylserine modification is found at serine 2. Serine 33 and serine 56 each carry phosphoserine.

In terms of assembly, interacts with CALM1. Phosphorylation at Ser-56 favors interaction with CALM1.

Its subcellular location is the cytoplasm. In terms of biological role, may act as a competitive inhibitor of calmodulin-dependent enzymes such as calcineurin in neurons. This is cAMP-regulated phosphoprotein 21 (ARPP21) from Bos taurus (Bovine).